Reading from the N-terminus, the 271-residue chain is MDPLANIKNEINLMNHRISSFATYVNYQLLEFKQSMSNIELMLQENIESKKKTKTDTEPNSPTKPLSTSIPTTTTAATSQSITSTSLSSSSSLSNQIAQPPIINGQVLNSSILTPTSRKKLSLVDIDKNNYNNYNNNNNNNNNNNNNNNNNNNNNNNNNNNNNNNVTTTDKKEGEKNENENENENENENENENENDIIEEDKIIEKMDEELENEQVEPVEQVKPKTQGGRKKVSKLTLDFGIGKRPVRTKTLTQLGIALEKEDTPKKRQRK.

2 disordered regions span residues 50-93 and 128-233; these read KKKT…SSSL and KNNY…RKKV. 2 stretches are compositionally biased toward low complexity: residues 61–93 and 129–165; these read SPTK…SSSL and NNYN…NNNN. A compositionally biased stretch (basic and acidic residues) spans 169–179; sequence TDKKEGEKNEN. Composition is skewed to acidic residues over residues 180 to 199 and 207 to 217; these read ENEN…DIIE and MDEELENEQVE.

This is an uncharacterized protein from Dictyostelium discoideum (Social amoeba).